The chain runs to 426 residues: NADH-quinone oxidoreductase subunit H 1 (426 aa).

10 consecutive transmembrane segments (helical) span residues 22–42 (LWATVYILVIFGVASVAVMLM), 91–111 (FLFWMAPVTVMMTAFTTYLVI), 124–144 (IGVLFMIGISSLGVLAVVMAG), 163–183 (MVSYEVAMGLAIVSVLMMTSL), 206–226 (FIFKFFPTGLVAFVIFAIAMV), 258–278 (LFFLGEYVAMIAVSSIAVTLW), 299–319 (FSVFPALLFFVLAAGCFIGWV), 331–351 (AIGLGIFGVLLGMIGAVLLIP), 357–377 (VSDIFWFSAKVGVFMYLYIWY), and 392–412 (IGWKVLLPVSLGVLIVTAVLG).

The protein belongs to the complex I subunit 1 family. As to quaternary structure, NDH-1 is composed of 14 different subunits. Subunits NuoA, H, J, K, L, M, N constitute the membrane sector of the complex.

It is found in the cell inner membrane. It carries out the reaction a quinone + NADH + 5 H(+)(in) = a quinol + NAD(+) + 4 H(+)(out). NDH-1 shuttles electrons from NADH, via FMN and iron-sulfur (Fe-S) centers, to quinones in the respiratory chain. The immediate electron acceptor for the enzyme in this species is believed to be ubiquinone. Couples the redox reaction to proton translocation (for every two electrons transferred, four hydrogen ions are translocated across the cytoplasmic membrane), and thus conserves the redox energy in a proton gradient. This subunit may bind ubiquinone. The sequence is that of NADH-quinone oxidoreductase subunit H 1 from Koribacter versatilis (strain Ellin345).